The chain runs to 545 residues: Membrane protein insertase YidC (545 aa).

The next 4 helical transmembrane spans lie at 350-370 (IIGN…AVLY), 424-444 (LPML…FASV), 461-481 (ADPY…QTYL), and 498-518 (PLVF…YWVV).

It belongs to the OXA1/ALB3/YidC family. Type 1 subfamily. As to quaternary structure, interacts with the Sec translocase complex via SecD. Specifically interacts with transmembrane segments of nascent integral membrane proteins during membrane integration.

The protein resides in the cell inner membrane. Its function is as follows. Required for the insertion and/or proper folding and/or complex formation of integral membrane proteins into the membrane. Involved in integration of membrane proteins that insert both dependently and independently of the Sec translocase complex, as well as at least some lipoproteins. Aids folding of multispanning membrane proteins. In Neisseria meningitidis serogroup B (strain ATCC BAA-335 / MC58), this protein is Membrane protein insertase YidC.